We begin with the raw amino-acid sequence, 271 residues long: Tryptophan synthase alpha chain (271 aa).

Catalysis depends on proton acceptor residues glutamate 59 and aspartate 70.

It belongs to the TrpA family. As to quaternary structure, tetramer of two alpha and two beta chains.

The enzyme catalyses (1S,2R)-1-C-(indol-3-yl)glycerol 3-phosphate + L-serine = D-glyceraldehyde 3-phosphate + L-tryptophan + H2O. It participates in amino-acid biosynthesis; L-tryptophan biosynthesis; L-tryptophan from chorismate: step 5/5. Its function is as follows. The alpha subunit is responsible for the aldol cleavage of indoleglycerol phosphate to indole and glyceraldehyde 3-phosphate. This is Tryptophan synthase alpha chain from Methanosarcina mazei (strain ATCC BAA-159 / DSM 3647 / Goe1 / Go1 / JCM 11833 / OCM 88) (Methanosarcina frisia).